Here is a 340-residue protein sequence, read N- to C-terminus: DNA-directed RNA polymerase subunit alpha (340 aa).

The tract at residues 1–233 (MYRNWRDLIS…EQLSIFINFD (233 aa)) is alpha N-terminal domain (alpha-NTD). The tract at residues 251–340 (VNENLYRSVD…RIRGERKDEE (90 aa)) is alpha C-terminal domain (alpha-CTD).

Belongs to the RNA polymerase alpha chain family. Homodimer. The RNAP catalytic core consists of 2 alpha, 1 beta, 1 beta' and 1 omega subunit. When a sigma factor is associated with the core the holoenzyme is formed, which can initiate transcription.

The enzyme catalyses RNA(n) + a ribonucleoside 5'-triphosphate = RNA(n+1) + diphosphate. In terms of biological role, DNA-dependent RNA polymerase catalyzes the transcription of DNA into RNA using the four ribonucleoside triphosphates as substrates. The polypeptide is DNA-directed RNA polymerase subunit alpha (Geobacter metallireducens (strain ATCC 53774 / DSM 7210 / GS-15)).